A 584-amino-acid chain; its full sequence is Aspartate--tRNA(Asp/Asn) ligase (584 aa).

Glutamate 177 lines the L-aspartate pocket. The tract at residues 201 to 204 is aspartate; sequence QLFK. Position 223 (arginine 223) interacts with L-aspartate. ATP-binding positions include 223–225 and glutamine 232; that span reads RDE. Histidine 447 provides a ligand contact to L-aspartate. Glutamate 481 contacts ATP. Arginine 488 lines the L-aspartate pocket. 533–536 contributes to the ATP binding site; the sequence is GLDR.

This sequence belongs to the class-II aminoacyl-tRNA synthetase family. Type 1 subfamily. Homodimer.

Its subcellular location is the cytoplasm. The catalysed reaction is tRNA(Asx) + L-aspartate + ATP = L-aspartyl-tRNA(Asx) + AMP + diphosphate. Aspartyl-tRNA synthetase with relaxed tRNA specificity since it is able to aspartylate not only its cognate tRNA(Asp) but also tRNA(Asn). Reaction proceeds in two steps: L-aspartate is first activated by ATP to form Asp-AMP and then transferred to the acceptor end of tRNA(Asp/Asn). This is Aspartate--tRNA(Asp/Asn) ligase from Chlamydia abortus (strain DSM 27085 / S26/3) (Chlamydophila abortus).